We begin with the raw amino-acid sequence, 1229 residues long: Receptor-type adenylate cyclase GRESAG 4.3 (1229 aa).

At Met1–Pro24 the chain is on the cytoplasmic side. A helical membrane pass occupies residues Thr25–Val45. The Extracellular segment spans residues Asp46–Gln845. N-linked (GlcNAc...) asparagine glycosylation is found at Asn77, Asn84, Asn626, Asn693, and Asn768. The helical transmembrane segment at Leu846–Leu866 threads the bilayer. Residues Ala867 to Val1229 are Cytoplasmic-facing. The Guanylate cyclase domain maps to Thr889 to Glu1043. The Mg(2+) site is built by Asp894 and Asp937.

Belongs to the adenylyl cyclase class-3 family. Requires Mg(2+) as cofactor.

It localises to the membrane. It carries out the reaction ATP = 3',5'-cyclic AMP + diphosphate. In terms of biological role, could act as a receptor for an unknown ligand. This chain is Receptor-type adenylate cyclase GRESAG 4.3 (GRESAG 4.3), found in Trypanosoma brucei brucei.